The sequence spans 209 residues: Streptogramin A acetyltransferase (209 aa).

Residue His-82 is part of the active site.

It belongs to the transferase hexapeptide repeat family. Homohexamer.

In terms of biological role, inactivates the A compounds of streptogramin antibiotics by acetylation, thus providing resistance to these antibiotics. This is Streptogramin A acetyltransferase (vatD) from Enterococcus faecium (Streptococcus faecium).